A 93-amino-acid chain; its full sequence is Small ribosomal subunit protein uS19 (93 aa).

It belongs to the universal ribosomal protein uS19 family.

Protein S19 forms a complex with S13 that binds strongly to the 16S ribosomal RNA. The protein is Small ribosomal subunit protein uS19 of Desulfitobacterium hafniense (strain DSM 10664 / DCB-2).